The following is a 393-amino-acid chain: Putative 8-amino-7-oxononanoate synthase (393 aa).

Substrate is bound at residue Arg23. 110 to 111 (GY) is a binding site for pyridoxal 5'-phosphate. Substrate is bound at residue His135. Pyridoxal 5'-phosphate is bound by residues Ser183, 208–211 (DEAH), and 239–242 (TLSK). At Lys242 the chain carries N6-(pyridoxal phosphate)lysine. A substrate-binding site is contributed by Thr362.

Belongs to the class-II pyridoxal-phosphate-dependent aminotransferase family. BioF subfamily. In terms of assembly, homodimer. Requires pyridoxal 5'-phosphate as cofactor.

The enzyme catalyses 6-carboxyhexanoyl-[ACP] + L-alanine + H(+) = (8S)-8-amino-7-oxononanoate + holo-[ACP] + CO2. Its pathway is cofactor biosynthesis; biotin biosynthesis. In terms of biological role, catalyzes the decarboxylative condensation of pimeloyl-[acyl-carrier protein] and L-alanine to produce 8-amino-7-oxononanoate (AON), [acyl-carrier protein], and carbon dioxide. The sequence is that of Putative 8-amino-7-oxononanoate synthase (bioF) from Trichodesmium erythraeum (strain IMS101).